We begin with the raw amino-acid sequence, 921 residues long: Retinoblastoma-associated protein (921 aa).

2 disordered regions span residues 1 to 31 (MPPKPLRRAGAARSQRTSPEGGAGTASPPGG) and 603 to 634 (RSPKKKASGHPQSGTSNPDAQPSATSQTQKPQ). A compositionally biased stretch (polar residues) spans 612–634 (HPQSGTSNPDAQPSATSQTQKPQ). The Bipartite nuclear localization signal signature appears at 853-869 (KRSAEPSDAPKPLKRLR). The interval 873-921 (EGQDEADGGKHLPQESKFQQKLAEMTSTRTRMQKQKLNDGNDTSANEEK) is disordered. Positions 910 to 921 (NDGNDTSANEEK) are enriched in polar residues.

This sequence belongs to the retinoblastoma protein (RB) family. As to quaternary structure, interacts with and sequesters the E2F1 transcription factor, thereby inhibiting E2F1 transcription. Interacts with SUV39H1, KMT5B and KMT5C. (Microbial infection) Interacts with, and is inhibited by fowl adenovirus 1 protein GAM-1. In terms of processing, phosphorylated in G1, thereby releasing E2F1 which is then able to activate cell growth. Dephosphorylated at the late M phase. Phosphorylation of domain C promotes interaction between the C-terminal domain C and the Pocket domain, and thereby inhibits interactions with heterodimeric E2F/DP transcription factor complexes.

The protein localises to the nucleus. Its subcellular location is the cytoplasm. In terms of biological role, tumor suppressor that is a key regulator of the G1/S transition of the cell cycle. The hypophosphorylated form binds transcription regulators of the E2F family, preventing transcription of E2F-responsive genes. Both physically blocks E2Fs transactivating domain and recruits chromatin-modifying enzymes that actively repress transcription. Cyclin and CDK-dependent phosphorylation of RB1 induces its dissociation from E2Fs, thereby activating transcription of E2F responsive genes and triggering entry into S phase. RB1 also promotes the G0-G1 transition upon phosphorylation and activation by CDK3/cyclin-C. In Gallus gallus (Chicken), this protein is Retinoblastoma-associated protein (RB1).